A 175-amino-acid chain; its full sequence is MGRTLENKQQIVGELKGLLAETELALVLDFKGLSIKEMSDLRDRLRVTNSVCKVTKNTLMRRAIDGDSSWANLDSLLTGTNAFVLVKGDVGAGVKAVRSFQNEFKKSETKGALFEGKLLSQDEIKAIADLPSREELMAQIAGAINAVATKVAVGINEVPTGMARALKQHAEGGDS.

Belongs to the universal ribosomal protein uL10 family. Part of the ribosomal stalk of the 50S ribosomal subunit. The N-terminus interacts with L11 and the large rRNA to form the base of the stalk. The C-terminus forms an elongated spine to which L12 dimers bind in a sequential fashion forming a multimeric L10(L12)X complex.

Its function is as follows. Forms part of the ribosomal stalk, playing a central role in the interaction of the ribosome with GTP-bound translation factors. In Synechococcus sp. (strain CC9902), this protein is Large ribosomal subunit protein uL10.